Consider the following 219-residue polypeptide: RPA-interacting protein (219 aa).

Ser-18 carries the phosphoserine modification. The RIP-type zinc finger occupies Cys-137 to Cys-212. A mediates nuclear export region spans residues Ser-164–Val-180.

Interacts with the RPA1 subunit of RPA complex. Sumoylated; required for localization in the nuclear PML body and transport of RPA complex in PML body. Upon UV irradiation and during S phase, it is desumoylated, releasing RPA complex that is translocated to sites of DNA damage. Sumoylation takes place at different Lys residues.

The protein resides in the nucleus. Functionally, mediates the import of RPA complex into the nucleus, possibly via some interaction with importin beta. Sumoylation mediates the localization of RPA complex into the PML body of the nucleus, thereby participating in RPA function in DNA metabolism. The polypeptide is RPA-interacting protein (Rpain) (Mus musculus (Mouse)).